The chain runs to 178 residues: Bifunctional protein PyrR (178 aa).

Substrate contacts are provided by residues 41-42 (RR), 103-111 (DDVLYTGRT), and Arg-136. A PRPP-binding motif is present at residues 99 to 111 (VILVDDVLYTGRT).

It belongs to the purine/pyrimidine phosphoribosyltransferase family. PyrR subfamily. As to quaternary structure, homodimer and homohexamer; in equilibrium.

It catalyses the reaction UMP + diphosphate = 5-phospho-alpha-D-ribose 1-diphosphate + uracil. In terms of biological role, regulates transcriptional attenuation of the pyrimidine nucleotide (pyr) operon by binding in a uridine-dependent manner to specific sites on pyr mRNA. This disrupts an antiterminator hairpin in the RNA and favors formation of a downstream transcription terminator, leading to a reduced expression of downstream genes. Its function is as follows. Also displays a weak uracil phosphoribosyltransferase activity which is not physiologically significant. The chain is Bifunctional protein PyrR from Clostridium acetobutylicum (strain ATCC 824 / DSM 792 / JCM 1419 / IAM 19013 / LMG 5710 / NBRC 13948 / NRRL B-527 / VKM B-1787 / 2291 / W).